Reading from the N-terminus, the 568-residue chain is Urease subunit alpha (568 aa).

The region spanning 131–568 (GGMDAHIHFI…LPLAQRYFLY (438 aa)) is the Urease domain. Positions 136, 138, and 219 each coordinate Ni(2+). Position 219 is an N6-carboxylysine (K219). Position 221 (H221) interacts with substrate. Positions 248 and 274 each coordinate Ni(2+). The active-site Proton donor is H322. D362 contributes to the Ni(2+) binding site.

It belongs to the metallo-dependent hydrolases superfamily. Urease alpha subunit family. In terms of assembly, heterotrimer of UreA (gamma), UreB (beta) and UreC (alpha) subunits. Three heterotrimers associate to form the active enzyme. The cofactor is Ni cation. Carboxylation allows a single lysine to coordinate two nickel ions.

Its subcellular location is the cytoplasm. It carries out the reaction urea + 2 H2O + H(+) = hydrogencarbonate + 2 NH4(+). The protein operates within nitrogen metabolism; urea degradation; CO(2) and NH(3) from urea (urease route): step 1/1. The protein is Urease subunit alpha of Cereibacter sphaeroides (strain ATCC 17023 / DSM 158 / JCM 6121 / CCUG 31486 / LMG 2827 / NBRC 12203 / NCIMB 8253 / ATH 2.4.1.) (Rhodobacter sphaeroides).